Here is a 62-residue protein sequence, read N- to C-terminus: uncharacterized protein (62 aa).

This is an uncharacterized protein from Escherichia coli (Bacteriophage T4).